The chain runs to 170 residues: Crossover junction endodeoxyribonuclease RuvC (170 aa).

Residues Asp9, Glu70, and Asp145 contribute to the active site. Residues Asp9, Glu70, and Asp145 each contribute to the Mg(2+) site.

The protein belongs to the RuvC family. As to quaternary structure, homodimer which binds Holliday junction (HJ) DNA. The HJ becomes 2-fold symmetrical on binding to RuvC with unstacked arms; it has a different conformation from HJ DNA in complex with RuvA. In the full resolvosome a probable DNA-RuvA(4)-RuvB(12)-RuvC(2) complex forms which resolves the HJ. Requires Mg(2+) as cofactor.

It is found in the cytoplasm. The catalysed reaction is Endonucleolytic cleavage at a junction such as a reciprocal single-stranded crossover between two homologous DNA duplexes (Holliday junction).. The RuvA-RuvB-RuvC complex processes Holliday junction (HJ) DNA during genetic recombination and DNA repair. Endonuclease that resolves HJ intermediates. Cleaves cruciform DNA by making single-stranded nicks across the HJ at symmetrical positions within the homologous arms, yielding a 5'-phosphate and a 3'-hydroxyl group; requires a central core of homology in the junction. The consensus cleavage sequence is 5'-(A/T)TT(C/G)-3'. Cleavage occurs on the 3'-side of the TT dinucleotide at the point of strand exchange. HJ branch migration catalyzed by RuvA-RuvB allows RuvC to scan DNA until it finds its consensus sequence, where it cleaves and resolves the cruciform DNA. This Chlamydia muridarum (strain MoPn / Nigg) protein is Crossover junction endodeoxyribonuclease RuvC.